Here is a 424-residue protein sequence, read N- to C-terminus: Serpin A11 (424 aa).

The signal sequence occupies residues 1–21; it reads MGPVWLWLWLLVAEVLLPVHC. N-linked (GlcNAc...) asparagine glycans are attached at residues asparagine 108, asparagine 171, asparagine 352, and asparagine 387.

This sequence belongs to the serpin family.

It is found in the secreted. This chain is Serpin A11 (Serpina11), found in Mus musculus (Mouse).